A 142-amino-acid chain; its full sequence is Hemoglobin subunit alpha-A (142 aa).

The 141-residue stretch at 2–142 (VLSAADKTNV…VGAVLTAKYR (141 aa)) folds into the Globin domain. An O2-binding site is contributed by H59. H88 contributes to the heme b binding site.

It belongs to the globin family. Heterotetramer of two alpha chains and two beta chains. As to expression, red blood cells.

Involved in oxygen transport from the lung to the various peripheral tissues. This Cairina moschata (Muscovy duck) protein is Hemoglobin subunit alpha-A (HBAA).